Here is a 638-residue protein sequence, read N- to C-terminus: Epithelial sodium channel subunit beta (638 aa).

Residues 1–50 (MPVKKYLLKCLHRLQKGPGYTYKELLVWYCNNTNTHGPKRIICEGPKKKA) lie on the Cytoplasmic side of the membrane. The chain crosses the membrane as a helical span at residues 51 to 71 (MWFLLTLLFACLVCWQWGVFI). The Extracellular segment spans residues 72–530 (QTYLSWEVSV…GGQFGFWMGG (459 aa)). 9 disulfides stabilise this stretch: Cys-98–Cys-270, Cys-182–Cys-187, Cys-194–Cys-201, Cys-247–Cys-254, Cys-359–Cys-446, Cys-384–Cys-442, Cys-388–Cys-438, Cys-397–Cys-424, and Cys-399–Cys-413. N-linked (GlcNAc...) asparagine glycans are attached at residues Asn-135 and Asn-141. Residues 531-551 (SVLCLIEFGEIIIDFIWITVI) traverse the membrane as a helical segment. The Cytoplasmic portion of the chain corresponds to 552 to 638 (KLVASCKGLR…MESDSEVEAI (87 aa)). The interval 598-620 (NAEVYPDQQTLPIPGTPPPNYDS) is disordered. The PY motif; recruits WW domain-containing proteins and is thereby required for ubiquitination and inhibition of the channel by NEDD4 and NEDD4L motif lies at 614 to 618 (PPPNY). Phosphoserine occurs at positions 631 and 633.

Belongs to the amiloride-sensitive sodium channel (TC 1.A.6) family. SCNN1B subfamily. As to quaternary structure, component of the heterotrimeric epithelial sodium channel (ENaC) composed of an alpha/SCNN1A, a beta/SCNN1B and a gamma/SCNN1G subunit. Interacts with WWP1 (via WW domains). Interacts with WWP2 (via WW domains). Interacts with the full-length immature form of PCSK9 (pro-PCSK9). Interacts (N-glycosylated) with BPIFA1; the interaction is direct and inhibits the proteolytic processing of SCNN1A and SCNN1G and the activation of ENaC. Post-translationally, ubiquitinated. Can be ubiquitinated at multiple sites and undergo monoubiquitination and polyubiquitination. Ubiquitination by NEDD4 or NEDD4L inhibits the ENaC channel through endocytosis, intracellular retention and degradation of its individual subunits. However, some studies could not confirm the ubiquitination of this subunit of the ENaC. In terms of processing, N-glycosylated. N-glycosylation is required for interaction with BPIFA1. Phosphorylated on serine and threonine residues. Aldosterone and insulin increase the basal level of phosphorylation. In terms of tissue distribution, expressed in lung and epididymis. In the caput region of the epididymis, expressed at the luminal and basolateral surfaces of the ducts and in the smooth muscle coat. In the caudal region of the epididymis, expressed along the luminal border but not continuously, in the smooth muscle coat, in the interstitial muscle tissue and in sperm in the caudal lumen.

It localises to the apical cell membrane. The protein resides in the cytoplasmic vesicle membrane. The enzyme catalyses Na(+)(in) = Na(+)(out). Originally identified and characterized by its inhibition by the diuretic drug amiloride. In terms of biological role, this is one of the three pore-forming subunits of the heterotrimeric epithelial sodium channel (ENaC), a critical regulator of sodium balance and fluid homeostasis. ENaC operates in epithelial tissues, where it mediates the electrodiffusion of sodium ions from extracellular fluid through the apical membrane of cells, with water following osmotically. It plays a key role in maintaining sodium homeostasis through electrogenic sodium reabsorption in the kidneys. This subunit is not essential for ENaC function in airway surface liquid homeostasis and proper mucus clearance. The sequence is that of Epithelial sodium channel subunit beta from Rattus norvegicus (Rat).